We begin with the raw amino-acid sequence, 337 residues long: F-box protein At2g27310 (337 aa).

The 49-residue stretch at 10 to 58 (DSISTLHSDIIQTQILTRLDGPTLASTATTSSYLQTLCTEEKLWQELSI) folds into the F-box domain.

This is F-box protein At2g27310 from Arabidopsis thaliana (Mouse-ear cress).